Here is a 305-residue protein sequence, read N- to C-terminus: Endonuclease 1 (305 aa).

A signal peptide spans 1–28 (MASAFRSSTRLILVLGILILCSVSSVRS). Residues Trp29 and His34 each coordinate a divalent metal cation. Substrate is bound at residue 29–34 (WSKEGH). Residues Cys38 and Cys69 are joined by a disulfide bond. Positions 73 and 88 each coordinate a divalent metal cation. Substrate contacts are provided by residues 73–79 (DQIRHWY), 88–91 (HYID), and 98–103 (SYEYSR). Intrachain disulfides connect Cys97–Cys249, Cys105–Cys115, and Cys230–Cys236. Substrate contacts are provided by Asn122 and Tyr139. An N-linked (GlcNAc...) asparagine glycan is attached at Asn122. Asn140 is a glycosylation site (N-linked (GlcNAc...) asparagine). The a divalent metal cation site is built by His150, Asp154, His160, His184, and Asp188. The interval 150–199 (HFMGDIHQPMHVGFTSDEGGNTIDLRWYKHKSNLHHVWDREIILTALKEN) is substrate binding. N-linked (GlcNAc...) asparagine glycosylation occurs at Asn214. Positions 287-305 (MILNRVFSDDHAIAGVAAT) are cleaved as a propeptide — removed in mature form.

It belongs to the nuclease type I family. Monomer. Mn(2+) serves as cofactor. Requires Ca(2+) as cofactor. As to expression, mostly expressed in flowers and during leaf and stem senescence, and, to a lower extent, detectable at low levels in roots, leaves, and stems. Particularly expressed in senescing tissues in a NAC92/ORE1-dependent manner.

The catalysed reaction is Endonucleolytic cleavage to 5'-phosphomononucleotide and 5'-phosphooligonucleotide end-products.. Endonuclease that can use RNA, single-stranded and double-stranded DNA as substrates. Hydrolyzes single-stranded DNA and RNA without apparent specificity for bases during senescence. Endonuclease that recognizes and cleaves all types of mismatches with high efficiency, including heteroduplex double-stranded DNA. Maybe involved in programmed cell death (PCD) and senescence. The polypeptide is Endonuclease 1 (Arabidopsis thaliana (Mouse-ear cress)).